The primary structure comprises 388 residues: WD repeat-containing protein 55 (388 aa).

The span at 1-20 shows a compositional bias: acidic residues; the sequence is MDPTCEESPAEDSNNEEEDL. Residues 1-33 form a disordered region; it reads MDPTCEESPAEDSNNEEEDLDSTKAAPRIRDTP. WD repeat units follow at residues 37-76, 83-122, 126-164, 167-206, 209-248, 251-290, and 293-333; these read VLEA…GETK, HHLK…LERR, AHSA…PLMD, QHEE…FELL, PQSG…ATSD, ALRA…VVGT, and QHAG…TVVV. Serine 355 carries the post-translational modification Phosphoserine. Residues 364–388 form a disordered region; that stretch reads REDEEDAKAPEEVVRESDDDDDDSD. Residues 370–379 are compositionally biased toward basic and acidic residues; sequence AKAPEEVVRE.

Belongs to the WD repeat WDR55 family.

It localises to the nucleus. The protein resides in the nucleolus. It is found in the cytoplasm. Functionally, nucleolar protein that acts as a modulator of rRNA synthesis. Plays a central role during organogenesis. This is WD repeat-containing protein 55 (Wdr55) from Mus musculus (Mouse).